We begin with the raw amino-acid sequence, 398 residues long: Selection and upkeep of intraepithelial T-cells protein 8 (398 aa).

An N-terminal signal peptide occupies residues 1 to 25 (MMKPEFSHFFGFCVYFLFLQVMASS). The 116-residue stretch at 26–141 (EKLRVTTPTR…DVAIMNLNVT (116 aa)) folds into the Ig-like V-type domain. Over 26–244 (EKLRVTTPTR…ANELFNQDYL (219 aa)) the chain is Extracellular. Cys-49 and Cys-123 are joined by a disulfide. N-linked (GlcNAc...) asparagine glycosylation is found at Asn-92 and Asn-139. Positions 142 to 233 (AVGLETEIHV…TGEEKQTSII (92 aa)) constitute an Ig-like C1-type domain. Cysteines 163 and 217 form a disulfide. Residues 245 to 265 (WVGIFPFSVLSLILFGVLPFI) form a helical membrane-spanning segment. Residues 266 to 288 (NSFFRSQGCASGCLSKCLPVVTS) lie on the Cytoplasmic side of the membrane. A helical transmembrane segment spans residues 289-309 (WPVQIVHFLVCSGVLFAVYLP). Topologically, residues 310–331 (HRYRVSLSDPQFPLYNNWITEL) are extracellular. The chain crosses the membrane as a helical span at residues 332 to 352 (LIVILFLTICFVLPITVLLLI). Topologically, residues 353–398 (KLSPTCLAKWEKNKDDIMDSQLGLGKAREASTLYEEQSRKSWEQEK) are cytoplasmic.

It belongs to the SKINT family. In terms of tissue distribution, expressed in skin, thymus, testis and, to a lower extent, bladder, brain, heart, kidney, mammary gland, small intestine and uterus.

The protein localises to the membrane. May act by engaging a cell surface molecule on immature T-cells in the embryonic thymus. The chain is Selection and upkeep of intraepithelial T-cells protein 8 (Skint8) from Mus musculus (Mouse).